The sequence spans 1322 residues: FERM and PDZ domain-containing protein 4 (1322 aa).

A WW domain is found at 33-66 (QVPPYGWEMTANRDGRDYFINHMTQAIPFDDPRL). The PDZ domain maps to 78 to 155 (KVEMRRDPVL…SILLTVIQPY (78 aa)). The FERM domain maps to 204 to 519 (NVLKVYLENG…GYYRLLVDSR (316 aa)). Disordered stretches follow at residues 809 to 847 (APPPGFRDSSDEEDSQSQAASFPEDKEKGSSLQNDEIPV), 900 to 927 (SPESSSDSGNETNSSEMTESSELATAQK), 952 to 983 (EFPASKTPAGGLPPKSSHALAARPATDLPPKV), 1027 to 1080 (RKSK…STFN), 1105 to 1148 (SGLE…GQGD), 1160 to 1180 (AKDLDNPEDADSSTCDHPSKL), and 1207 to 1227 (HFSLQSSQGSSVDAGCGTGSS). Over residues 902 to 921 (ESSSDSGNETNSSEMTESSE) the composition is skewed to low complexity. Residues 1041-1054 (NGNTTGKKQQGTKT) are compositionally biased toward low complexity. Residues 1067–1080 (TVSSRDSQHLSTFN) are compositionally biased toward polar residues. A compositionally biased stretch (polar residues) spans 1207-1217 (HFSLQSSQGSS).

As to quaternary structure, interacts (via C-terminus) with DLG1, DLG2, DLG3 and DLG4/PSD95. Interacts (via N-terminus) with ARHGEF7; the interaction is mediated by the PDZ domain. Interacts with GPSM2 (via TPR repeat region).

The protein resides in the cell projection. It localises to the dendritic spine. In terms of biological role, positive regulator of dendritic spine morphogenesis and density. Required for the maintenance of excitatory synaptic transmission. Binds phosphatidylinositol 4,5-bisphosphate. The polypeptide is FERM and PDZ domain-containing protein 4 (FRMPD4) (Homo sapiens (Human)).